A 1133-amino-acid chain; its full sequence is ATP-dependent DNA helicase homolog MER3 (1133 aa).

The Helicase ATP-binding domain occupies 34-229; sequence PLCFHSDINM…WLKVPTAGIK (196 aa). 47–54 serves as a coordination point for ATP; sequence APTGSGKT. Residues 165-168 carry the DEVH box motif; that stretch reads DEVH. One can recognise a Helicase C-terminal domain in the interval 263–460; it reads YIYDILMQYS…CLIEHLTAEI (198 aa). One can recognise an SEC63 domain in the interval 536–847; that stretch reads EPGRLMTKYY…FEEYIGIDLH (312 aa). Residues 878–919 are disordered; sequence ACIADDDNPVTSGPSNRKDKKDDMPSFKLIDDDSEEEKEPYV. Residues 893-908 show a composition bias toward basic and acidic residues; that stretch reads NRKDKKDDMPSFKLID. Residues 909 to 919 are compositionally biased toward acidic residues; that stretch reads DDSEEEKEPYV.

It belongs to the helicase family. SKI2 subfamily. In terms of tissue distribution, expressed in meiocytes during meiosis.

The protein resides in the nucleus. It carries out the reaction Couples ATP hydrolysis with the unwinding of duplex DNA by translocating in the 3'-5' direction.. It catalyses the reaction ATP + H2O = ADP + phosphate + H(+). DNA helicase required for crossover formation, complete synapsis of homologous chromosomes and bivalent formation during meiosis. Is specific to recombination events resulting in interference-sensitive crossovers (class I meiotic crossover). The sequence is that of ATP-dependent DNA helicase homolog MER3 from Arabidopsis thaliana (Mouse-ear cress).